We begin with the raw amino-acid sequence, 212 residues long: Uridine kinase (212 aa).

Residue 13 to 20 coordinates ATP; it reads GASASGKS.

This sequence belongs to the uridine kinase family.

The protein localises to the cytoplasm. The enzyme catalyses uridine + ATP = UMP + ADP + H(+). It carries out the reaction cytidine + ATP = CMP + ADP + H(+). It functions in the pathway pyrimidine metabolism; CTP biosynthesis via salvage pathway; CTP from cytidine: step 1/3. Its pathway is pyrimidine metabolism; UMP biosynthesis via salvage pathway; UMP from uridine: step 1/1. In Psychromonas ingrahamii (strain DSM 17664 / CCUG 51855 / 37), this protein is Uridine kinase.